Reading from the N-terminus, the 344-residue chain is Arginine N-succinyltransferase (344 aa).

Residue leucine 125 coordinates succinyl-CoA. Histidine 229 serves as the catalytic Proton donor.

The protein belongs to the arginine N-succinyltransferase family.

The enzyme catalyses succinyl-CoA + L-arginine = N(2)-succinyl-L-arginine + CoA + H(+). The protein operates within amino-acid degradation; L-arginine degradation via AST pathway; L-glutamate and succinate from L-arginine: step 1/5. Catalyzes the transfer of succinyl-CoA to arginine to produce N(2)-succinylarginine. The polypeptide is Arginine N-succinyltransferase (Shigella boydii serotype 4 (strain Sb227)).